Here is a 203-residue protein sequence, read N- to C-terminus: Ribonuclease HII (203 aa).

The region spanning 16-203 is the RNase H type-2 domain; sequence ENIACCDEVG…HRKSFLNKIL (188 aa). A divalent metal cation-binding residues include Asp-22, Glu-23, and Asp-120.

The protein belongs to the RNase HII family. Requires Mn(2+) as cofactor. Mg(2+) is required as a cofactor.

Its subcellular location is the cytoplasm. The catalysed reaction is Endonucleolytic cleavage to 5'-phosphomonoester.. Functionally, endonuclease that specifically degrades the RNA of RNA-DNA hybrids. The protein is Ribonuclease HII of Alkaliphilus oremlandii (strain OhILAs) (Clostridium oremlandii (strain OhILAs)).